The sequence spans 234 residues: MATSLSVSRFMSSSATVISVAKPLLSPTVSFTAPLSFTRSLAPNLSLKFRNRRTNSASATTRSFATTPVTASISVGDKLPDSTLSYLDPSTGDVKTVTVSSLTAGKKTILFAVPGAFTPTCSQKHVPGFVSKAGELRSKGIDVIACISVNDAFVMEAWRKDLGINDEVMLLSDGNGEFTGKLGVELDLRDKPVGLGVRSRRYAILADDGVVKVLNLEEGGAFTNSSAEDMLKAL.

A chloroplast-targeting transit peptide spans methionine 1 to threonine 70. In terms of domain architecture, Thioredoxin spans isoleucine 73 to leucine 234. Serine 82 carries the post-translational modification Phosphoserine. Cysteine 121 (cysteine sulfenic acid (-SOH) intermediate) is an active-site residue.

The protein belongs to the peroxiredoxin family. Prx5 subfamily. As to quaternary structure, monomer. In terms of tissue distribution, expressed in all tissues but predominantly in buds, siliques and seeds.

The protein resides in the plastid. The protein localises to the chloroplast stroma. It carries out the reaction [glutaredoxin]-dithiol + a hydroperoxide = [glutaredoxin]-disulfide + an alcohol + H2O. Its function is as follows. Thiol-specific peroxidase that catalyzes the reduction of hydrogen peroxide and organic hydroperoxides to water and alcohols, respectively. Plays a role in cell protection against oxidative stress by detoxifying peroxides. May be involved in chloroplast redox homeostasis. This is Peroxiredoxin-2E, chloroplastic (PRXIIE) from Arabidopsis thaliana (Mouse-ear cress).